Here is a 660-residue protein sequence, read N- to C-terminus: Bifunctional polymyxin resistance protein ArnA (660 aa).

The tract at residues 1 to 304 (MKTVVFAYHD…MLGLVQGSRL (304 aa)) is formyltransferase ArnAFT. 86–88 (HLI) provides a ligand contact to (6R)-10-formyltetrahydrofolate. The active-site Proton donor; for formyltransferase activity is His104. (6R)-10-formyltetrahydrofolate is bound by residues Arg114 and 136 to 140 (VKRAD). A dehydrogenase ArnADH region spans residues 314-660 (RRTRVLILGV…RTVDLTDKPS (347 aa)). NAD(+) is bound by residues Asp347 and 368–369 (DI). Residues Ala393, Tyr398, and 432-433 (TS) contribute to the UDP-alpha-D-glucuronate site. Glu434 acts as the Proton acceptor; for decarboxylase activity in catalysis. UDP-alpha-D-glucuronate-binding positions include Arg460, Asn492, 526-535 (KLIDGGKQKR), and Tyr613. Arg619 functions as the Proton donor; for decarboxylase activity in the catalytic mechanism.

In the N-terminal section; belongs to the Fmt family. UDP-L-Ara4N formyltransferase subfamily. The protein in the C-terminal section; belongs to the NAD(P)-dependent epimerase/dehydratase family. UDP-glucuronic acid decarboxylase subfamily. Homohexamer, formed by a dimer of trimers.

The enzyme catalyses UDP-alpha-D-glucuronate + NAD(+) = UDP-beta-L-threo-pentopyranos-4-ulose + CO2 + NADH. The catalysed reaction is UDP-4-amino-4-deoxy-beta-L-arabinose + (6R)-10-formyltetrahydrofolate = UDP-4-deoxy-4-formamido-beta-L-arabinose + (6S)-5,6,7,8-tetrahydrofolate + H(+). The protein operates within nucleotide-sugar biosynthesis; UDP-4-deoxy-4-formamido-beta-L-arabinose biosynthesis; UDP-4-deoxy-4-formamido-beta-L-arabinose from UDP-alpha-D-glucuronate: step 1/3. It functions in the pathway nucleotide-sugar biosynthesis; UDP-4-deoxy-4-formamido-beta-L-arabinose biosynthesis; UDP-4-deoxy-4-formamido-beta-L-arabinose from UDP-alpha-D-glucuronate: step 3/3. It participates in bacterial outer membrane biogenesis; lipopolysaccharide biosynthesis. Bifunctional enzyme that catalyzes the oxidative decarboxylation of UDP-glucuronic acid (UDP-GlcUA) to UDP-4-keto-arabinose (UDP-Ara4O) and the addition of a formyl group to UDP-4-amino-4-deoxy-L-arabinose (UDP-L-Ara4N) to form UDP-L-4-formamido-arabinose (UDP-L-Ara4FN). The modified arabinose is attached to lipid A and is required for resistance to polymyxin and cationic antimicrobial peptides. This Shigella sonnei (strain Ss046) protein is Bifunctional polymyxin resistance protein ArnA.